Here is a 129-residue protein sequence, read N- to C-terminus: Small ribosomal subunit protein uS9 (129 aa).

This sequence belongs to the universal ribosomal protein uS9 family.

This Helicobacter pylori (strain J99 / ATCC 700824) (Campylobacter pylori J99) protein is Small ribosomal subunit protein uS9 (rpsI).